The following is a 235-amino-acid chain: Small ribosomal subunit protein uS3 (235 aa).

A KH type-2 domain is found at valine 39–lysine 107. Residues alanine 215–lysine 235 form a disordered region.

This sequence belongs to the universal ribosomal protein uS3 family. In terms of assembly, part of the 30S ribosomal subunit. Forms a tight complex with proteins S10 and S14.

Its function is as follows. Binds the lower part of the 30S subunit head. Binds mRNA in the 70S ribosome, positioning it for translation. This is Small ribosomal subunit protein uS3 from Haemophilus influenzae (strain ATCC 51907 / DSM 11121 / KW20 / Rd).